We begin with the raw amino-acid sequence, 243 residues long: tRNA (guanine-N(1)-)-methyltransferase (243 aa).

Residues glycine 123 and 143-148 (LGDFVM) contribute to the S-adenosyl-L-methionine site.

It belongs to the RNA methyltransferase TrmD family. Homodimer.

The protein resides in the cytoplasm. The enzyme catalyses guanosine(37) in tRNA + S-adenosyl-L-methionine = N(1)-methylguanosine(37) in tRNA + S-adenosyl-L-homocysteine + H(+). Functionally, specifically methylates guanosine-37 in various tRNAs. In Ruegeria pomeroyi (strain ATCC 700808 / DSM 15171 / DSS-3) (Silicibacter pomeroyi), this protein is tRNA (guanine-N(1)-)-methyltransferase.